The following is a 313-amino-acid chain: Dehydrodolichyl diphosphate synthase CPT5, chloroplastic (313 aa).

The transit peptide at 1-42 (MAFSFQLQQVFPFPVKFCSQPKSIKLQIFPNLTKRLPIHPLA) directs the protein to the chloroplast. Asp-89 is an active-site residue.

Belongs to the UPP synthase family. Mg(2+) serves as cofactor. Expressed in leaf trichomes, stem trichomes and old leaves. Expressed at low levels in young leaves and flowers.

It localises to the plastid. The protein localises to the chloroplast. It carries out the reaction n isopentenyl diphosphate + (2E,6E)-farnesyl diphosphate = a di-trans,poly-cis-polyprenyl diphosphate + n diphosphate. In terms of biological role, catalyzes cis-prenyl chain elongation to produce the polyprenyl backbone of dolichol, a glycosyl carrier-lipid required for the biosynthesis of several classes of glycoprotein. The sequence is that of Dehydrodolichyl diphosphate synthase CPT5, chloroplastic from Solanum lycopersicum (Tomato).